The chain runs to 128 residues: Crossover junction endodeoxyribonuclease Hjc (128 aa).

Glutamate 10 contacts Mg(2+). Serine 30 is an active-site residue. Aspartate 34 and glutamate 47 together coordinate Mg(2+).

This sequence belongs to the Holliday junction resolvase Hjc family. Homodimer. Mg(2+) is required as a cofactor.

The enzyme catalyses Endonucleolytic cleavage at a junction such as a reciprocal single-stranded crossover between two homologous DNA duplexes (Holliday junction).. A structure-specific endonuclease that resolves Holliday junction (HJ) intermediates during genetic recombination. Cleaves 4-way DNA junctions introducing paired nicks in opposing strands, leaving a 5'-terminal phosphate and a 3'-terminal hydroxyl group that are subsequently ligated to produce recombinant products. This chain is Crossover junction endodeoxyribonuclease Hjc, found in Thermococcus kodakarensis (strain ATCC BAA-918 / JCM 12380 / KOD1) (Pyrococcus kodakaraensis (strain KOD1)).